Consider the following 339-residue polypeptide: Holliday junction branch migration complex subunit RuvB (339 aa).

A large ATPase domain (RuvB-L) region spans residues 2–187; the sequence is KDVNDEERII…FGIIEHMQYY (186 aa). ATP-binding positions include leucine 26, arginine 27, glycine 68, lysine 71, threonine 72, threonine 73, 134-136, arginine 177, tyrosine 187, and arginine 224; that span reads EDF. Threonine 72 serves as a coordination point for Mg(2+). A small ATPAse domain (RuvB-S) region spans residues 188-258; that stretch reads SIDDLEKIIQ…TTKHSLHLLE (71 aa). A head domain (RuvB-H) region spans residues 261-339; sequence DEGLDQTDRK…QLGYPPKKAE (79 aa). DNA-binding residues include arginine 316 and arginine 321.

Belongs to the RuvB family. In terms of assembly, homohexamer. Forms an RuvA(8)-RuvB(12)-Holliday junction (HJ) complex. HJ DNA is sandwiched between 2 RuvA tetramers; dsDNA enters through RuvA and exits via RuvB. An RuvB hexamer assembles on each DNA strand where it exits the tetramer. Each RuvB hexamer is contacted by two RuvA subunits (via domain III) on 2 adjacent RuvB subunits; this complex drives branch migration. In the full resolvosome a probable DNA-RuvA(4)-RuvB(12)-RuvC(2) complex forms which resolves the HJ.

Its subcellular location is the cytoplasm. The enzyme catalyses ATP + H2O = ADP + phosphate + H(+). The RuvA-RuvB-RuvC complex processes Holliday junction (HJ) DNA during genetic recombination and DNA repair, while the RuvA-RuvB complex plays an important role in the rescue of blocked DNA replication forks via replication fork reversal (RFR). RuvA specifically binds to HJ cruciform DNA, conferring on it an open structure. The RuvB hexamer acts as an ATP-dependent pump, pulling dsDNA into and through the RuvAB complex. RuvB forms 2 homohexamers on either side of HJ DNA bound by 1 or 2 RuvA tetramers; 4 subunits per hexamer contact DNA at a time. Coordinated motions by a converter formed by DNA-disengaged RuvB subunits stimulates ATP hydrolysis and nucleotide exchange. Immobilization of the converter enables RuvB to convert the ATP-contained energy into a lever motion, pulling 2 nucleotides of DNA out of the RuvA tetramer per ATP hydrolyzed, thus driving DNA branch migration. The RuvB motors rotate together with the DNA substrate, which together with the progressing nucleotide cycle form the mechanistic basis for DNA recombination by continuous HJ branch migration. Branch migration allows RuvC to scan DNA until it finds its consensus sequence, where it cleaves and resolves cruciform DNA. The sequence is that of Holliday junction branch migration complex subunit RuvB from Lactobacillus gasseri (strain ATCC 33323 / DSM 20243 / BCRC 14619 / CIP 102991 / JCM 1131 / KCTC 3163 / NCIMB 11718 / NCTC 13722 / AM63).